Here is a 504-residue protein sequence, read N- to C-terminus: ATP synthase subunit alpha, chloroplastic (504 aa).

170–177 (GDRQTGKT) provides a ligand contact to ATP.

It belongs to the ATPase alpha/beta chains family. As to quaternary structure, F-type ATPases have 2 components, CF(1) - the catalytic core - and CF(0) - the membrane proton channel. CF(1) has five subunits: alpha(3), beta(3), gamma(1), delta(1), epsilon(1). CF(0) has four main subunits: a, b, b' and c.

The protein localises to the plastid. It is found in the chloroplast thylakoid membrane. It carries out the reaction ATP + H2O + 4 H(+)(in) = ADP + phosphate + 5 H(+)(out). Its function is as follows. Produces ATP from ADP in the presence of a proton gradient across the membrane. The alpha chain is a regulatory subunit. This Hordeum vulgare (Barley) protein is ATP synthase subunit alpha, chloroplastic.